A 372-amino-acid polypeptide reads, in one-letter code: F-box/kelch-repeat protein At5g49000 (372 aa).

The segment covering 1-11 (MSSPERKRKKR) has biased composition (basic residues). The segment at 1 to 24 (MSSPERKRKKRSLEPSPESTPNPS) is disordered. Positions 19-65 (STPNPSLPDDLIVSILARVSRLYYPILSLVSKSSRTLVTSPELYKTR) constitute an F-box domain. Kelch repeat units follow at residues 131–177 (NIYA…VVDG), 179–224 (IYVA…VIEG), 226–271 (IYIF…LYCY), and 273–312 (PGGIKWYESEKRSWRKLRGLKGLSKLASSCVKLADYGGKM).

The protein is F-box/kelch-repeat protein At5g49000 of Arabidopsis thaliana (Mouse-ear cress).